The following is a 573-amino-acid chain: Chromosomal replication initiator protein DnaA (573 aa).

The segment at M1–R85 is domain I, interacts with DnaA modulators. Residues R85–V231 are domain II. The segment at V91–S232 is disordered. Low complexity predominate over residues P116–Q169. The segment covering Q178–S191 has biased composition (polar residues). The span at S202–A213 shows a compositional bias: pro residues. Residues S232 to S448 form a domain III, AAA+ region region. Residues G276, G278, K279, and T280 each contribute to the ATP site. Residues S449 to N573 form a domain IV, binds dsDNA region.

The protein belongs to the DnaA family. In terms of assembly, oligomerizes as a right-handed, spiral filament on DNA at oriC.

Its subcellular location is the cytoplasm. Plays an essential role in the initiation and regulation of chromosomal replication. ATP-DnaA binds to the origin of replication (oriC) to initiate formation of the DNA replication initiation complex once per cell cycle. Binds the DnaA box (a 9 base pair repeat at the origin) and separates the double-stranded (ds)DNA. Forms a right-handed helical filament on oriC DNA; dsDNA binds to the exterior of the filament while single-stranded (ss)DNA is stabiized in the filament's interior. The ATP-DnaA-oriC complex binds and stabilizes one strand of the AT-rich DNA unwinding element (DUE), permitting loading of DNA polymerase. After initiation quickly degrades to an ADP-DnaA complex that is not apt for DNA replication. Binds acidic phospholipids. The sequence is that of Chromosomal replication initiator protein DnaA from Corynebacterium efficiens (strain DSM 44549 / YS-314 / AJ 12310 / JCM 11189 / NBRC 100395).